Here is a 294-residue protein sequence, read N- to C-terminus: 4-hydroxy-tetrahydrodipicolinate synthase (294 aa).

Thr-45 serves as a coordination point for pyruvate. Tyr-133 serves as the catalytic Proton donor/acceptor. The Schiff-base intermediate with substrate role is filled by Lys-161. Residue Ile-203 coordinates pyruvate.

This sequence belongs to the DapA family. As to quaternary structure, homotetramer; dimer of dimers.

It is found in the cytoplasm. It carries out the reaction L-aspartate 4-semialdehyde + pyruvate = (2S,4S)-4-hydroxy-2,3,4,5-tetrahydrodipicolinate + H2O + H(+). Its pathway is amino-acid biosynthesis; L-lysine biosynthesis via DAP pathway; (S)-tetrahydrodipicolinate from L-aspartate: step 3/4. Catalyzes the condensation of (S)-aspartate-beta-semialdehyde [(S)-ASA] and pyruvate to 4-hydroxy-tetrahydrodipicolinate (HTPA). The protein is 4-hydroxy-tetrahydrodipicolinate synthase of Shewanella sp. (strain MR-7).